We begin with the raw amino-acid sequence, 387 residues long: 1,3-propanediol dehydrogenase (387 aa).

The protein belongs to the iron-containing alcohol dehydrogenase family. In terms of assembly, homooctamer. Fe cation is required as a cofactor.

It carries out the reaction propane-1,3-diol + NAD(+) = 3-hydroxypropanal + NADH + H(+). Its activity is regulated as follows. Inhibited by the metal chelator 1,10-phenanthroline. Catalyzes the reduction of 3-hydroxypropanal. Is considerably less active with glyceraldehyde, propionaldehyde, acetaldehyde, and butyraldehyde. Also catalyzes the oxidation of various primary, secondary, and tertiary alcohols. Is most active with substrates containing two primary alcohol groups separated by one or two carbon atoms. 1,3-propanediol is the preferred substrate. The chain is 1,3-propanediol dehydrogenase from Citrobacter freundii.